Here is a 68-residue protein sequence, read N- to C-terminus: Large ribosomal subunit protein bL31 (68 aa).

Residues C17, C19, C37, and C40 each contribute to the Zn(2+) site.

This sequence belongs to the bacterial ribosomal protein bL31 family. Type A subfamily. Part of the 50S ribosomal subunit. It depends on Zn(2+) as a cofactor.

Functionally, binds the 23S rRNA. In Clostridium perfringens (strain ATCC 13124 / DSM 756 / JCM 1290 / NCIMB 6125 / NCTC 8237 / Type A), this protein is Large ribosomal subunit protein bL31.